The following is a 178-amino-acid chain: Caveolin-1 (178 aa).

Ser-2 bears the N-acetylserine mark. Ser-2 is modified (phosphoserine). A required for homooligomerization region spans residues 2 to 94 (SGGKYVDSEG…WKASFTTFTV (93 aa)). Topologically, residues 2–104 (SGGKYVDSEG…TKYWFYRLLS (103 aa)) are cytoplasmic. Lys-5 bears the N6-acetyllysine; alternate mark. Lys-5 is covalently cross-linked (Glycyl lysine isopeptide (Lys-Gly) (interchain with G-Cter in ubiquitin); alternate). Residue Tyr-6 is modified to Phosphotyrosine. Ser-9 carries the phosphoserine modification. At Tyr-14 the chain carries Phosphotyrosine; by ABL1. A Phosphotyrosine modification is found at Tyr-25. Residues Lys-26, Lys-30, Lys-39, Lys-47, and Lys-57 each participate in a glycyl lysine isopeptide (Lys-Gly) (interchain with G-Cter in ubiquitin) cross-link. Positions 82-94 (DGIWKASFTTFTV) are interaction with CAVIN3. Residues 105–125 (ALFGIPMALIWGIYFAILSFL) constitute an intramembrane region (helical). At 126–178 (HIWAVVPCIKSFLIEIQCISRVYSIYVHTFCDPLFEAIGKIFSNIRINMQKEI) the chain is on the cytoplasmic side. The segment at 131 to 142 (VPCIKSFLIEIQ) is interacts with SPRY1, SPRY2, SPRY3 and SPRY4. 3 S-palmitoyl cysteine lipidation sites follow: Cys-133, Cys-143, and Cys-156. Residues 149-160 (SIYVHTFCDPLF) form an interacts with SPRY1, SPRY2, and SPRY4 region. The segment at 167 to 178 (FSNIRINMQKEI) is interacts with SPRY1, SPRY2, SPRY3 and SPRY4.

This sequence belongs to the caveolin family. As to quaternary structure, homooligomer. Interacts with GLIPR2. Interacts with NOSTRIN. Interacts with SNAP25 and STX1A. Interacts (via the N-terminus) with DPP4; the interaction is direct. Interacts with CTNNB1, CDH1 and JUP. Interacts with PACSIN2; this interaction induces membrane tubulation. Interacts with SLC7A9. Interacts with BMX and BTK. Interacts with TGFBR1. Interacts with CAVIN3 (via leucine-zipper domain) in a cholesterol-sensitive manner. Interacts with CAVIN1. Interacts with EHD2 in a cholesterol-dependent manner. Forms a ternary complex with UBXN6 and VCP; mediates CAV1 targeting to lysosomes for degradation. Interacts with ABCG1; this interaction regulates ABCG1-mediated cholesterol efflux. Interacts with NEU3; this interaction enhances NEU3 sialidase activity within caveola. Interacts (via C-terminus) with SPRY1, SPRY2 (via C-terminus), SPRY3, and SPRY4. Interacts with IGFBP5; this interaction allows trafficking of IGFBP5 from the plasma membrane to the nucleus. Phosphorylated at Tyr-14 by ABL1 in response to oxidative stress. Post-translationally, ubiquitinated. Undergo monoubiquitination and multi- and/or polyubiquitination. Monoubiquitination of N-terminal lysines promotes integration in a ternary complex with UBXN6 and VCP which promotes oligomeric CAV1 targeting to lysosomes for degradation. Ubiquitinated by ZNRF1; leading to degradation and modulation of the TLR4-mediated immune response.

The protein localises to the golgi apparatus membrane. Its subcellular location is the cell membrane. It is found in the membrane. It localises to the caveola. The protein resides in the membrane raft. May act as a scaffolding protein within caveolar membranes. Forms a stable heterooligomeric complex with CAV2 that targets to lipid rafts and drives caveolae formation. Mediates the recruitment of CAVIN proteins (CAVIN1/2/3/4) to the caveolae. Interacts directly with G-protein alpha subunits and can functionally regulate their activity. Involved in the costimulatory signal essential for T-cell receptor (TCR)-mediated T-cell activation. Its binding to DPP4 induces T-cell proliferation and NF-kappa-B activation in a T-cell receptor/CD3-dependent manner. Recruits CTNNB1 to caveolar membranes and may regulate CTNNB1-mediated signaling through the Wnt pathway. Negatively regulates TGFB1-mediated activation of SMAD2/3 by mediating the internalization of TGFBR1 from membrane rafts leading to its subsequent degradation. Binds 20(S)-hydroxycholesterol (20(S)-OHC). This Muntiacus reevesi (Reeves' muntjac) protein is Caveolin-1 (CAV1).